We begin with the raw amino-acid sequence, 303 residues long: Putative AraC-like transcription regulator (303 aa).

Residues 202-300 (ASALTFLHRD…GMNPGDYRKH (99 aa)) form the HTH araC/xylS-type domain. 2 DNA-binding regions (H-T-H motif) span residues 219 to 240 (AELASAAAVSRSTLAARFKATV) and 267 to 290 (LAAIAHSVGYGSESALSVAFKRVL).

This chain is Putative AraC-like transcription regulator, found in Streptomyces antibioticus.